The following is a 292-amino-acid chain: Non-homologous end joining protein Ku (292 aa).

A Ku domain is found at 12–196 (KLSLVTCPVV…KITKDMVELA (185 aa)). The interval 231-292 (KPIKLPEPEE…RSAARQRKAG (62 aa)) is disordered. Residues 271-292 (APAHRRPAKKAHRSAARQRKAG) are compositionally biased toward basic residues.

The protein belongs to the prokaryotic Ku family. In terms of assembly, homodimer. Interacts with LigD.

In terms of biological role, with LigD forms a non-homologous end joining (NHEJ) DNA repair enzyme, which repairs dsDNA breaks with reduced fidelity. Binds linear dsDNA with 5'- and 3'- overhangs but not closed circular dsDNA nor ssDNA. Recruits and stimulates the ligase activity of LigD. This is Non-homologous end joining protein Ku from Bradyrhizobium sp. (strain ORS 278).